The sequence spans 135 residues: Large ribosomal subunit protein eL27x (135 aa).

It belongs to the eukaryotic ribosomal protein eL27 family.

The polypeptide is Large ribosomal subunit protein eL27x (RPL27C) (Arabidopsis thaliana (Mouse-ear cress)).